Reading from the N-terminus, the 156-residue chain is Small ribosomal subunit protein uS7 (156 aa).

Belongs to the universal ribosomal protein uS7 family. Part of the 30S ribosomal subunit. Contacts proteins S9 and S11.

In terms of biological role, one of the primary rRNA binding proteins, it binds directly to 16S rRNA where it nucleates assembly of the head domain of the 30S subunit. Is located at the subunit interface close to the decoding center, probably blocks exit of the E-site tRNA. The protein is Small ribosomal subunit protein uS7 of Geobacillus sp. (strain WCH70).